The chain runs to 273 residues: Light-independent protochlorophyllide reductase iron-sulfur ATP-binding protein (273 aa).

ATP contacts are provided by residues 12–17 (GIGKST) and lysine 41. Serine 16 is a Mg(2+) binding site. Positions 97 and 131 each coordinate [4Fe-4S] cluster. 182–183 (NR) lines the ATP pocket.

It belongs to the NifH/BchL/ChlL family. In terms of assembly, homodimer. Protochlorophyllide reductase is composed of three subunits; BchL, BchN and BchB. [4Fe-4S] cluster is required as a cofactor.

It carries out the reaction chlorophyllide a + oxidized 2[4Fe-4S]-[ferredoxin] + 2 ADP + 2 phosphate = protochlorophyllide a + reduced 2[4Fe-4S]-[ferredoxin] + 2 ATP + 2 H2O. The protein operates within porphyrin-containing compound metabolism; bacteriochlorophyll biosynthesis (light-independent). In terms of biological role, component of the dark-operative protochlorophyllide reductase (DPOR) that uses Mg-ATP and reduced ferredoxin to reduce ring D of protochlorophyllide (Pchlide) to form chlorophyllide a (Chlide). This reaction is light-independent. The L component serves as a unique electron donor to the NB-component of the complex, and binds Mg-ATP. This chain is Light-independent protochlorophyllide reductase iron-sulfur ATP-binding protein, found in Chloroflexus aggregans (strain MD-66 / DSM 9485).